The primary structure comprises 58 residues: Small ribosomal subunit protein bS21 (58 aa).

This sequence belongs to the bacterial ribosomal protein bS21 family.

The sequence is that of Small ribosomal subunit protein bS21 from Latilactobacillus sakei subsp. sakei (strain 23K) (Lactobacillus sakei subsp. sakei).